The following is a 292-amino-acid chain: 4-hydroxy-tetrahydrodipicolinate synthase (292 aa).

Residue Thr45 participates in pyruvate binding. Residue Tyr133 is the Proton donor/acceptor of the active site. Catalysis depends on Lys161, which acts as the Schiff-base intermediate with substrate. Ile203 is a pyruvate binding site.

It belongs to the DapA family. In terms of assembly, homotetramer; dimer of dimers.

The protein localises to the cytoplasm. It catalyses the reaction L-aspartate 4-semialdehyde + pyruvate = (2S,4S)-4-hydroxy-2,3,4,5-tetrahydrodipicolinate + H2O + H(+). It participates in amino-acid biosynthesis; L-lysine biosynthesis via DAP pathway; (S)-tetrahydrodipicolinate from L-aspartate: step 3/4. In terms of biological role, catalyzes the condensation of (S)-aspartate-beta-semialdehyde [(S)-ASA] and pyruvate to 4-hydroxy-tetrahydrodipicolinate (HTPA). The sequence is that of 4-hydroxy-tetrahydrodipicolinate synthase from Erwinia tasmaniensis (strain DSM 17950 / CFBP 7177 / CIP 109463 / NCPPB 4357 / Et1/99).